A 447-amino-acid chain; its full sequence is Phosphatidylinositol 4-kinase type 2-alpha (447 aa).

The interval 1 to 77 is disordered; the sequence is MDETSPLVSP…HRNEFPEDPE (77 aa). Positions 48 to 77 are enriched in basic and acidic residues; the sequence is RSRERQPLLDRDRGASPRDPHRNEFPEDPE. One can recognise a PI3K/PI4K catalytic domain in the interval 92-421; the sequence is GIYPERIYQG…VQMPPVIVET (330 aa). A G-loop region spans residues 98-104; it reads IYQGSSG. Residues 99–105 and Lys-120 each bind ATP; that span reads YQGSSGS. Residues 125 to 127 form an important for substrate binding region; it reads EPY. The tract at residues 133-146 is important for interaction with membranes; it reads KWTKWLQKLCCPCC. Residues Cys-142, Cys-143, Cys-145, and Cys-146 are each lipidated (S-palmitoyl cysteine). An ATP-binding site is contributed by 229 to 232; sequence QIFV. Residues 236–244 are important for interaction with membranes; the sequence is KDADFWLRR. The tract at residues 273-281 is catalytic loop; that stretch reads RNTDRGNDN. The activation loop stretch occupies residues 312–332; sequence AIDNGLAFPLKHPDSWRAYPF. Asp-314 lines the ATP pocket. The important for interaction with membranes stretch occupies residues 327-336; that stretch reads WRAYPFYWAW.

It belongs to the PI3/PI4-kinase family. Type II PI4K subfamily.

It is found in the golgi apparatus. The protein resides in the trans-Golgi network membrane. It localises to the membrane raft. The protein localises to the endosome. Its subcellular location is the cytoplasmic vesicle. It is found in the cell projection. The protein resides in the dendrite. It localises to the presynaptic cell membrane. The protein localises to the synapse. Its subcellular location is the synaptosome. It is found in the mitochondrion. The protein resides in the membrane. It localises to the cell membrane. The protein localises to the perikaryon. Its subcellular location is the neuron projection. The enzyme catalyses a 1,2-diacyl-sn-glycero-3-phospho-(1D-myo-inositol) + ATP = a 1,2-diacyl-sn-glycero-3-phospho-(1D-myo-inositol 4-phosphate) + ADP + H(+). Functionally, membrane-bound phosphatidylinositol-4 kinase (PI4-kinase) that catalyzes the phosphorylation of phosphatidylinositol (PI) to phosphatidylinositol 4-phosphate (PI4P), a lipid that plays important roles in endocytosis, Golgi function, protein sorting and membrane trafficking. Besides, phosphorylation of phosphatidylinositol (PI) to phosphatidylinositol 4-phosphate (PI4P) is the first committed step in the generation of phosphatidylinositol 4,5-bisphosphate (PIP2), a precursor of the second messenger inositol 1,4,5-trisphosphate (InsP3). The polypeptide is Phosphatidylinositol 4-kinase type 2-alpha (pi4k2a) (Danio rerio (Zebrafish)).